The primary structure comprises 353 residues: UPF0283 membrane protein YcjF (353 aa).

The next 3 helical transmembrane spans lie at 70-90 (MVMGGLALFGASVVGQGVQWT), 100-120 (VALGGCAAGALIIGAGVGSVV), and 213-233 (ESTLMIAVSPLALVDMAFIAW).

The protein belongs to the UPF0283 family.

It is found in the cell inner membrane. In Escherichia coli O139:H28 (strain E24377A / ETEC), this protein is UPF0283 membrane protein YcjF.